The following is a 365-amino-acid chain: Probable dual-specificity RNA methyltransferase RlmN (365 aa).

Catalysis depends on glutamate 108, which acts as the Proton acceptor. Positions 114-352 (YPDRNTVCIS…SCTVRDTRGR (239 aa)) constitute a Radical SAM core domain. Cysteine 121 and cysteine 358 form a disulfide bridge. The [4Fe-4S] cluster site is built by cysteine 128, cysteine 132, and cysteine 135. Residues 179–180 (GE), serine 213, 236–238 (SLH), and asparagine 315 each bind S-adenosyl-L-methionine. Residue cysteine 358 is the S-methylcysteine intermediate of the active site.

The protein belongs to the radical SAM superfamily. RlmN family. [4Fe-4S] cluster serves as cofactor.

The protein localises to the cytoplasm. The catalysed reaction is adenosine(2503) in 23S rRNA + 2 reduced [2Fe-2S]-[ferredoxin] + 2 S-adenosyl-L-methionine = 2-methyladenosine(2503) in 23S rRNA + 5'-deoxyadenosine + L-methionine + 2 oxidized [2Fe-2S]-[ferredoxin] + S-adenosyl-L-homocysteine. The enzyme catalyses adenosine(37) in tRNA + 2 reduced [2Fe-2S]-[ferredoxin] + 2 S-adenosyl-L-methionine = 2-methyladenosine(37) in tRNA + 5'-deoxyadenosine + L-methionine + 2 oxidized [2Fe-2S]-[ferredoxin] + S-adenosyl-L-homocysteine. Functionally, specifically methylates position 2 of adenine 2503 in 23S rRNA and position 2 of adenine 37 in tRNAs. This is Probable dual-specificity RNA methyltransferase RlmN from Mycolicibacterium gilvum (strain PYR-GCK) (Mycobacterium gilvum (strain PYR-GCK)).